The primary structure comprises 144 residues: Large ribosomal subunit protein uL15 (144 aa).

Residues 1 to 58 (MKLNNLSPAPGSKHAEKRVGRGIGSGLGKTGGRGHKGQKSRSGGSVKPGFEGGQMPLQ) are disordered. Residues 21–31 (RGIGSGLGKTG) are compositionally biased toward gly residues.

This sequence belongs to the universal ribosomal protein uL15 family. In terms of assembly, part of the 50S ribosomal subunit.

In terms of biological role, binds to the 23S rRNA. The chain is Large ribosomal subunit protein uL15 from Chromohalobacter salexigens (strain ATCC BAA-138 / DSM 3043 / CIP 106854 / NCIMB 13768 / 1H11).